Here is a 143-residue protein sequence, read N- to C-terminus: Transcriptional regulator MraZ (143 aa).

SpoVT-AbrB domains lie at 5 to 47 (THHP…PRAE) and 76 to 119 (TDEQ…NAER).

Belongs to the MraZ family. Forms oligomers.

Its subcellular location is the cytoplasm. The protein resides in the nucleoid. The polypeptide is Transcriptional regulator MraZ (Saccharopolyspora erythraea (strain ATCC 11635 / DSM 40517 / JCM 4748 / NBRC 13426 / NCIMB 8594 / NRRL 2338)).